We begin with the raw amino-acid sequence, 1017 residues long: Ubiquitin-like modifier-activating enzyme 1 (1017 aa).

2 repeat units span residues 26–163 (SHET…GQLF) and 419–571 (GKTL…QVVV). Residues 26 to 571 (SHETMKKITS…GTKGNTQVVV (546 aa)) form a 2 approximate repeats region. ATP-binding positions include A438, D464, R475, K488, and 536-537 (DN). C592 acts as the Glycyl thioester intermediate in catalysis. Over residues 765–781 (IQTSENEPAPSSNTQQA) the composition is skewed to polar residues. A disordered region spans residues 765 to 788 (IQTSENEPAPSSNTQQAGGDAEDD).

Belongs to the ubiquitin-activating E1 family. As to quaternary structure, monomer.

It catalyses the reaction ATP + ubiquitin + [E1 ubiquitin-activating enzyme]-L-cysteine = AMP + diphosphate + S-ubiquitinyl-[E1 ubiquitin-activating enzyme]-L-cysteine.. Its pathway is protein modification; protein ubiquitination. Its function is as follows. Catalyzes the first step in ubiquitin conjugation to mark cellular proteins for degradation through the ubiquitin-proteasome system. Activates ubiquitin by first adenylating its C-terminal glycine residue with ATP, and thereafter linking this residue to the side chain of a cysteine residue in E1, yielding a ubiquitin-E1 thioester and free AMP. This Dictyostelium discoideum (Social amoeba) protein is Ubiquitin-like modifier-activating enzyme 1 (uba1).